Consider the following 154-residue polypeptide: NADPH-dependent 7-cyano-7-deazaguanine reductase (154 aa).

Over residues 1–23 (MPNTDVSSLSMLGQQTETAQSPE) the composition is skewed to polar residues. The tract at residues 1–26 (MPNTDVSSLSMLGQQTETAQSPEQAV) is disordered. Cysteine 52 functions as the Thioimide intermediate in the catalytic mechanism. Aspartate 59 functions as the Proton donor in the catalytic mechanism. Substrate-binding positions include 74-76 (VES) and 93-94 (HE).

It belongs to the GTP cyclohydrolase I family. QueF type 1 subfamily.

The protein localises to the cytoplasm. It catalyses the reaction 7-aminomethyl-7-carbaguanine + 2 NADP(+) = 7-cyano-7-deazaguanine + 2 NADPH + 3 H(+). The protein operates within tRNA modification; tRNA-queuosine biosynthesis. Catalyzes the NADPH-dependent reduction of 7-cyano-7-deazaguanine (preQ0) to 7-aminomethyl-7-deazaguanine (preQ1). This Rhizobium leguminosarum bv. trifolii (strain WSM2304) protein is NADPH-dependent 7-cyano-7-deazaguanine reductase.